Here is a 394-residue protein sequence, read N- to C-terminus: MQPRRIVLLGSTGSIGTQAIDVVDGAPHLFEVVALSAGGGNLELLARQAVHTKAKAVGTASGDATALQRLIDDAARATGVAGYRPEIITGPDASTRIAEIEADVVLNGITGSIGLAPTLAALKSGATLALANKESLIVGGALVKAAAREGQIVPVDSEHSAIAQCLRSGTAAEVDRLILTASGGPFRGRTREELHNVSPEEALAHPTWDMGLMVTTNSASLVNKGLEVIEAHLLFDIPLDRIDVVVHPQSVVHSMVQFVDGSIIAQASPPDMRLPIALGLGWPDRVPKAATPCDWTQATSWTFEPLDAEAFPAVNLAKDAAKQGSTYPAVFNAANEEAVMAFHAGRIRFTDIVDTIEAVLSEHPGSSGLTVESVLDAEAWARARTHERLAVSSL.

Thr-12, Gly-13, Ser-14, Ile-15, Gly-38, Asn-41, and Asn-132 together coordinate NADPH. Position 133 (Lys-133) interacts with 1-deoxy-D-xylulose 5-phosphate. Glu-134 lines the NADPH pocket. Mn(2+) is bound at residue Asp-156. Residues Ser-157, Glu-158, Ser-182, and His-205 each coordinate 1-deoxy-D-xylulose 5-phosphate. Mn(2+) is bound at residue Glu-158. Gly-211 contributes to the NADPH binding site. The 1-deoxy-D-xylulose 5-phosphate site is built by Ser-218, Asn-223, Lys-224, and Glu-227. Position 227 (Glu-227) interacts with Mn(2+).

The protein belongs to the DXR family. The cofactor is Mg(2+). Mn(2+) serves as cofactor.

It catalyses the reaction 2-C-methyl-D-erythritol 4-phosphate + NADP(+) = 1-deoxy-D-xylulose 5-phosphate + NADPH + H(+). Its pathway is isoprenoid biosynthesis; isopentenyl diphosphate biosynthesis via DXP pathway; isopentenyl diphosphate from 1-deoxy-D-xylulose 5-phosphate: step 1/6. Catalyzes the NADPH-dependent rearrangement and reduction of 1-deoxy-D-xylulose-5-phosphate (DXP) to 2-C-methyl-D-erythritol 4-phosphate (MEP). The sequence is that of 1-deoxy-D-xylulose 5-phosphate reductoisomerase from Arthrobacter sp. (strain FB24).